Here is a 501-residue protein sequence, read N- to C-terminus: MAVMIVLLIGVITFVAWYVHQHFNYWKRRGIPHDEPKIPYGNTSELMKTVHFADIFKRTYNKLRNKTDGPFVGFYMYFKRMVVVTDIDFAKTVLIREFDKFHDRGVFHNERDDPLSANLVNIDGQKWKTLRQKLTPTFTSGKMKTMFPTILTVGDELIRVFGETASADSDSMEITNVVARFTADVIGSCAFGLDCHSLSDPKAKFVQMGTTAITERRHGKSMDLLLFGAPELAAKLRMKATVQEVEDFYMNIIRDTVDYRVKNNVKRHDFVDMLIEMKLKFDNGDKENGLTFNEIAAQAFIFFLAGFETSSTTMGFALYELACHQDIQDKLRTEINTVLKQHNGKLDYDSMREMTYLEKVIDETMRKRPVVGHLIRVATQHYQHTNPKYNIEKGTGVIVPTLAIHHDPEFYPEPEKFIPERFDEDQVQQRPACTFLPFGDGPRNCIGLRFGRMQVIVGMALLIHNFKFEFHPTKTVVPLEYRTDDFLLSSKGGIHLKVTRV.

Heme is bound at residue Cys-445.

This sequence belongs to the cytochrome P450 family. Heme is required as a cofactor.

The protein localises to the endoplasmic reticulum membrane. Its subcellular location is the microsome membrane. In terms of biological role, may be involved in the metabolism of insect hormones and in the breakdown of synthetic insecticides. In Drosophila melanogaster (Fruit fly), this protein is Probable cytochrome P450 6a20 (Cyp6a20).